The following is a 156-amino-acid chain: MNSAALNARTASVAPQPQACHACKCRQLLSRRVPPAQRQVECSAIAPETLQDIIVGGAVVGAVSVALYAGLKKDPVPCSLCQGTGGIRCFACGGDGRNATVSRDDLYDSKALGGGVAPPKRDPLGRTINPRDCKVCRGAGLVLCSQCKGTGFQSAF.

Residues 1–41 (MNSAALNARTASVAPQPQACHACKCRQLLSRRVPPAQRQVE) constitute a chloroplast transit peptide. Positions 78, 81, 89, 92, 133, 136, 144, and 147 each coordinate Zn(2+).

It belongs to the BSD2 chaperone family. As to quaternary structure, interacts with the RuBisCo large subunit (RbcL) assembled as an intermediate complex made of eight RbcL and eight BSD2 subunits.

Its subcellular location is the plastid. The protein resides in the chloroplast stroma. Its function is as follows. Chloroplast chaperone required for RuBisCo biogenesis and translational regulation of the RuBisCo large subunit (RbcL). Stabilizes an end-state assembly intermediate of eight RbcL subunits until the small subunits (RBCSs) become available to produce a complete stable RuBisCo complex containing eight small and eight large subunits. This Chlamydomonas reinhardtii (Chlamydomonas smithii) protein is Protein BUNDLE SHEATH DEFECTIVE 2, chloroplastic.